Consider the following 263-residue polypeptide: Palmitoyltransferase ZDHHC22 (263 aa).

Residues 1 to 9 (MLALRLLNV) are Cytoplasmic-facing. The chain crosses the membrane as a helical span at residues 10 to 30 (VAPAYFLCISLVTFVLQLFLF). Residues 31–47 (LPSMREDPTATPLFSPA) are Lumenal-facing. A helical membrane pass occupies residues 48 to 68 (VLHGALFLFLSANALGNYILV). The Cytoplasmic segment spans residues 69-125 (VQNSPDDLGACQGTSSQRPQRPPPSTHFCRVCARVTLRHDHHCFFTGNCIGSRNMRN). The 41-residue stretch at 91–131 (PPSTHFCRVCARVTLRHDHHCFFTGNCIGSRNMRNFILFCL) folds into the DHHC domain. The active-site S-palmitoyl cysteine intermediate is cysteine 111. Transmembrane regions (helical) follow at residues 126–146 (FILF…AGVA) and 147–167 (YISA…TLLP). The Cytoplasmic segment spans residues 168–182 (TSISQFFSGAVLGSD). A helical membrane pass occupies residues 183-203 (MFVILMLYLWFAVGLACAGFC). Residues 204–263 (CHQLLLILRGQTRYQVRKGVAVRARPWRKNLQEVFGKRWLLGLLVPMFNVGTESSKQQDK) are Lumenal-facing.

This sequence belongs to the DHHC palmitoyltransferase family. Interacts with CNN3.

The protein resides in the endoplasmic reticulum membrane. Its subcellular location is the golgi apparatus membrane. The catalysed reaction is L-cysteinyl-[protein] + hexadecanoyl-CoA = S-hexadecanoyl-L-cysteinyl-[protein] + CoA. Palmitoyltransferase that could catalyze the addition of palmitate onto various protein substrates and be involved in a variety of cellular processes. Catalyzes the palmitoylation of KCNMA1, regulating localization of KCNMA1 to the plasma membrane. Might also mediate palmitoylation of CNN3. The chain is Palmitoyltransferase ZDHHC22 from Rattus norvegicus (Rat).